Here is an 862-residue protein sequence, read N- to C-terminus: Protein translocase subunit SecA (862 aa).

ATP contacts are provided by residues glutamine 86, 104–108, and aspartate 499; that span reads GEGKT. Positions 848, 850, 859, and 860 each coordinate Zn(2+).

Belongs to the SecA family. As to quaternary structure, monomer and homodimer. Part of the essential Sec protein translocation apparatus which comprises SecA, SecYEG and auxiliary proteins SecDF-YajC and YidC. Zn(2+) is required as a cofactor.

It localises to the cell inner membrane. Its subcellular location is the cytoplasm. The catalysed reaction is ATP + H2O + cellular proteinSide 1 = ADP + phosphate + cellular proteinSide 2.. In terms of biological role, part of the Sec protein translocase complex. Interacts with the SecYEG preprotein conducting channel. Has a central role in coupling the hydrolysis of ATP to the transfer of proteins into and across the cell membrane, serving both as a receptor for the preprotein-SecB complex and as an ATP-driven molecular motor driving the stepwise translocation of polypeptide chains across the membrane. This is Protein translocase subunit SecA from Ehrlichia chaffeensis (strain ATCC CRL-10679 / Arkansas).